The chain runs to 237 residues: Large ribosomal subunit protein uL22m (237 aa).

The protein belongs to the universal ribosomal protein uL22 family.

It localises to the mitochondrion. The sequence is that of Large ribosomal subunit protein uL22m (mrpl22) from Dictyostelium discoideum (Social amoeba).